A 728-amino-acid chain; its full sequence is Magnetosome formation protease MamE (728 aa).

Topologically, residues 1-21 are cytoplasmic; the sequence is MAMFNGDVEDGGRGDASCGKD. Residues 22–42 traverse the membrane as a helical segment; it reads LKRYLMLMGVVALVVLFGAFI. Residues 43–728 are Lumenal-facing; it reads YRQSSGGLRL…RNGQEFWIVL (686 aa). Active-site charge relay system residues include H188, D221, and S297. Residues 375-398 carry the MCR (magnetochrome) 1 motif; that stretch reads IFAGTRAPHTDGRQNMDCTTCHDL. Heme contacts are provided by C392, C395, H396, C438, C441, and H442. The short motif at 421-444 is the MCR 2 element; the sequence is IPMGAVSPHTDGRQNMNCANCHQM. PDZ domains follow at residues 471 to 573 and 622 to 721; these read AINI…LRDG and PAVM…NRNG.

It in the N-terminal section; belongs to the peptidase S1C family. As to quaternary structure, might interact with MamB via PDZ1. Requires heme as cofactor. Post-translationally, subject to autocatalytic cleavage; cleavage also requires MamO.

Its subcellular location is the magnetosome membrane. Its activity is regulated as follows. Autoproteolysis is stimulated by exogenous substrates or peptides that bind to its PDZ domains; may be stimulated by an environmental cue in vivo. Protease activity is tightly regulated; increasing its activity decreases substrate levels and disturbs biomineralization. Its function is as follows. Acts at 2 distinct steps of magnetosome formation; required for correct localization of proteins to the magnetosome while the protease activity is required for maturation of small magnetite crystals into larger, functional ones. The 2 functions are separable by mutation. Probably cleaves at least itself, MamO and MamP; cleavage requires the putative transport domain of MamO. Involved in localization of some proteins (at least MamA, MamC, MamF, MamI and MamJ) to the magnetosome. This is Magnetosome formation protease MamE (mamE) from Paramagnetospirillum magneticum (strain ATCC 700264 / AMB-1) (Magnetospirillum magneticum).